Consider the following 330-residue polypeptide: 6-phosphogluconolactonase (330 aa).

The protein belongs to the cycloisomerase 2 family.

The enzyme catalyses 6-phospho-D-glucono-1,5-lactone + H2O = 6-phospho-D-gluconate + H(+). It participates in carbohydrate degradation; pentose phosphate pathway; D-ribulose 5-phosphate from D-glucose 6-phosphate (oxidative stage): step 2/3. In terms of biological role, catalyzes the hydrolysis of 6-phosphogluconolactone to 6-phosphogluconate. The sequence is that of 6-phosphogluconolactonase from Erwinia tasmaniensis (strain DSM 17950 / CFBP 7177 / CIP 109463 / NCPPB 4357 / Et1/99).